Here is a 353-residue protein sequence, read N- to C-terminus: Photosystem II D2 protein (353 aa).

At Thr-2 the chain carries N-acetylthreonine. Thr-2 carries the post-translational modification Phosphothreonine. A helical membrane pass occupies residues 41 to 61 (CAYFALGGWFTGTTFVTSWYT). His-118 contacts chlorophyll a. A helical membrane pass occupies residues 125–141 (GFMLRQFELARSVQLRP). Gln-130 and Asn-143 together coordinate pheophytin a. A helical membrane pass occupies residues 153–166 (VFVSVFLIYPLGQS). His-198 serves as a coordination point for chlorophyll a. A helical membrane pass occupies residues 208 to 228 (AALLCAIHGATVENTLFEDGD). A plastoquinone is bound by residues His-215 and Phe-262. His-215 contributes to the Fe cation binding site. Position 269 (His-269) interacts with Fe cation. A helical membrane pass occupies residues 279–295 (GLWMSAIGVVGLALNLR).

The protein belongs to the reaction center PufL/M/PsbA/D family. PSII is composed of 1 copy each of membrane proteins PsbA, PsbB, PsbC, PsbD, PsbE, PsbF, PsbH, PsbI, PsbJ, PsbK, PsbL, PsbM, PsbT, PsbX, PsbY, PsbZ, Psb30/Ycf12, at least 3 peripheral proteins of the oxygen-evolving complex and a large number of cofactors. It forms dimeric complexes. The D1/D2 heterodimer binds P680, chlorophylls that are the primary electron donor of PSII, and subsequent electron acceptors. It shares a non-heme iron and each subunit binds pheophytin, quinone, additional chlorophylls, carotenoids and lipids. There is also a Cl(-1) ion associated with D1 and D2, which is required for oxygen evolution. The PSII complex binds additional chlorophylls, carotenoids and specific lipids. serves as cofactor.

It is found in the plastid. Its subcellular location is the chloroplast thylakoid membrane. It carries out the reaction 2 a plastoquinone + 4 hnu + 2 H2O = 2 a plastoquinol + O2. Its function is as follows. Photosystem II (PSII) is a light-driven water:plastoquinone oxidoreductase that uses light energy to abstract electrons from H(2)O, generating O(2) and a proton gradient subsequently used for ATP formation. It consists of a core antenna complex that captures photons, and an electron transfer chain that converts photonic excitation into a charge separation. The D1/D2 (PsbA/PsbD) reaction center heterodimer binds P680, the primary electron donor of PSII as well as several subsequent electron acceptors. D2 is needed for assembly of a stable PSII complex. The sequence is that of Photosystem II D2 protein from Saccharum hybrid (Sugarcane).